The sequence spans 341 residues: L-amino acid-D/L-Glu epimerase (341 aa).

Substrate-binding positions include threonine 132 and 157–159; that span reads KIK. 3 residues coordinate Mg(2+): aspartate 186, glutamate 212, and aspartate 237. Substrate is bound by residues lysine 261 and 315-317; that span reads DLD.

The protein belongs to the mandelate racemase/muconate lactonizing enzyme family. Mg(2+) is required as a cofactor.

Catalyzes the epimerization of dipeptides with L-Glu in the second position. Has epimerase activity with L-Gly-L-Glu, L-Ala-L-Glu, L-Ser-L-Glu, L-Pro-L-Glu, L-Val-L-Glu, L-Met-L-Glu, L-Thr-L-Glu and L-Phe-L-Glu (in vitro). The chain is L-amino acid-D/L-Glu epimerase from Sulfurimonas denitrificans (strain ATCC 33889 / DSM 1251) (Thiomicrospira denitrificans (strain ATCC 33889 / DSM 1251)).